The primary structure comprises 130 residues: Glycine cleavage system H protein (130 aa).

In terms of domain architecture, Lipoyl-binding spans 25 to 107 (IATIGITEFA…YGEGWFLKVR (83 aa)). Lys-66 carries the post-translational modification N6-lipoyllysine.

Belongs to the GcvH family. In terms of assembly, the glycine cleavage system is composed of four proteins: P, T, L and H. It depends on (R)-lipoate as a cofactor.

Its function is as follows. The glycine cleavage system catalyzes the degradation of glycine. The H protein shuttles the methylamine group of glycine from the P protein to the T protein. This Nostoc sp. (strain PCC 7120 / SAG 25.82 / UTEX 2576) protein is Glycine cleavage system H protein.